The primary structure comprises 229 residues: Cytochrome c oxidase subunit 2 (229 aa).

Over 1-26 (MSTWANLGLQDSASPLMEQLIFFHDH) the chain is Mitochondrial intermembrane. Residues 27–48 (ALLILVMITVLVGYLMFMLFFN) traverse the membrane as a helical segment. At 49 to 62 (SYVNRFLLHGQLIE) the chain is on the mitochondrial matrix side. Residues 63-82 (MIWTILPAIILLFIAMPSLR) form a helical membrane-spanning segment. At 83-229 (LLYLLDEINE…IKWISNSVNS (147 aa)) the chain is on the mitochondrial intermembrane side. His-161, Cys-196, Glu-198, Cys-200, His-204, and Met-207 together coordinate Cu cation. Glu-198 contacts Mg(2+).

It belongs to the cytochrome c oxidase subunit 2 family. Component of the cytochrome c oxidase (complex IV, CIV), a multisubunit enzyme composed of a catalytic core of 3 subunits and several supernumerary subunits. The complex exists as a monomer or a dimer and forms supercomplexes (SCs) in the inner mitochondrial membrane with ubiquinol-cytochrome c oxidoreductase (cytochrome b-c1 complex, complex III, CIII). The cofactor is Cu cation.

The protein resides in the mitochondrion inner membrane. It catalyses the reaction 4 Fe(II)-[cytochrome c] + O2 + 8 H(+)(in) = 4 Fe(III)-[cytochrome c] + 2 H2O + 4 H(+)(out). Functionally, component of the cytochrome c oxidase, the last enzyme in the mitochondrial electron transport chain which drives oxidative phosphorylation. The respiratory chain contains 3 multisubunit complexes succinate dehydrogenase (complex II, CII), ubiquinol-cytochrome c oxidoreductase (cytochrome b-c1 complex, complex III, CIII) and cytochrome c oxidase (complex IV, CIV), that cooperate to transfer electrons derived from NADH and succinate to molecular oxygen, creating an electrochemical gradient over the inner membrane that drives transmembrane transport and the ATP synthase. Cytochrome c oxidase is the component of the respiratory chain that catalyzes the reduction of oxygen to water. Electrons originating from reduced cytochrome c in the intermembrane space (IMS) are transferred via the dinuclear copper A center (CU(A)) of subunit 2 and heme A of subunit 1 to the active site in subunit 1, a binuclear center (BNC) formed by heme A3 and copper B (CU(B)). The BNC reduces molecular oxygen to 2 water molecules using 4 electrons from cytochrome c in the IMS and 4 protons from the mitochondrial matrix. The sequence is that of Cytochrome c oxidase subunit 2 (mt:CoII) from Drosophila ambigua (Fruit fly).